We begin with the raw amino-acid sequence, 387 residues long: Succinate--CoA ligase [ADP-forming] subunit beta (387 aa).

Positions 9-244 constitute an ATP-grasp domain; that stretch reads KALLQRYGVN…WSQDDAKEAE (236 aa). ATP-binding positions include Lys46, 53 to 55, Glu99, Leu102, and Glu107; that span reads GRG. 2 residues coordinate Mg(2+): Asn199 and Asp213. Substrate is bound by residues Asn264 and 321–323; that span reads GIM.

It belongs to the succinate/malate CoA ligase beta subunit family. Heterotetramer of two alpha and two beta subunits. The cofactor is Mg(2+).

The catalysed reaction is succinate + ATP + CoA = succinyl-CoA + ADP + phosphate. It carries out the reaction GTP + succinate + CoA = succinyl-CoA + GDP + phosphate. It functions in the pathway carbohydrate metabolism; tricarboxylic acid cycle; succinate from succinyl-CoA (ligase route): step 1/1. In terms of biological role, succinyl-CoA synthetase functions in the citric acid cycle (TCA), coupling the hydrolysis of succinyl-CoA to the synthesis of either ATP or GTP and thus represents the only step of substrate-level phosphorylation in the TCA. The beta subunit provides nucleotide specificity of the enzyme and binds the substrate succinate, while the binding sites for coenzyme A and phosphate are found in the alpha subunit. The polypeptide is Succinate--CoA ligase [ADP-forming] subunit beta (Methylobacillus flagellatus (strain ATCC 51484 / DSM 6875 / VKM B-1610 / KT)).